Here is a 122-residue protein sequence, read N- to C-terminus: Secreted RxLR effector protein 80 (122 aa).

The first 21 residues, 1–21 (MKKRALPIVIFVISLQQSSQS), serve as a signal peptide directing secretion. Positions 72–75 (RSLR) match the RxLR motif.

It belongs to the RxLR effector family.

Its subcellular location is the secreted. The protein resides in the host endoplasmic reticulum membrane. Its function is as follows. Secreted effector that dos not suppress the host cell death induced by cell death-inducing proteins. The polypeptide is Secreted RxLR effector protein 80 (Plasmopara viticola (Downy mildew of grapevine)).